The chain runs to 201 residues: Small ribosomal subunit protein uS4c (201 aa).

The segment at 20–39 (GLTRKTPKSGSNLKKKFHSG) is disordered. The S4 RNA-binding domain maps to 89–150 (MRLDNILFRL…NQRSKRLVQN (62 aa)).

It belongs to the universal ribosomal protein uS4 family. As to quaternary structure, part of the 30S ribosomal subunit. Contacts protein S5. The interaction surface between S4 and S5 is involved in control of translational fidelity.

The protein resides in the plastid. The protein localises to the chloroplast. In terms of biological role, one of the primary rRNA binding proteins, it binds directly to 16S rRNA where it nucleates assembly of the body of the 30S subunit. Its function is as follows. With S5 and S12 plays an important role in translational accuracy. The polypeptide is Small ribosomal subunit protein uS4c (rps4) (Oryza nivara (Indian wild rice)).